Consider the following 359-residue polypeptide: Phosphatidylglycerol--prolipoprotein diacylglyceryl transferase (359 aa).

4 helical membrane-spanning segments follow: residues V24–G44, V58–V78, V98–I118, and G124–I144. Position 146 (R146) interacts with a 1,2-diacyl-sn-glycero-3-phospho-(1'-sn-glycerol). The next 3 helical transmembrane spans lie at F193–L213, I222–E243, and V258–T278. The interval P284–D359 is disordered. Over residues I306–G323 the composition is skewed to basic and acidic residues. Residues A336 to T349 show a composition bias toward low complexity. Positions I350–D359 are enriched in basic and acidic residues.

The protein belongs to the Lgt family.

It localises to the cell membrane. The enzyme catalyses L-cysteinyl-[prolipoprotein] + a 1,2-diacyl-sn-glycero-3-phospho-(1'-sn-glycerol) = an S-1,2-diacyl-sn-glyceryl-L-cysteinyl-[prolipoprotein] + sn-glycerol 1-phosphate + H(+). It participates in protein modification; lipoprotein biosynthesis (diacylglyceryl transfer). In terms of biological role, catalyzes the transfer of the diacylglyceryl group from phosphatidylglycerol to the sulfhydryl group of the N-terminal cysteine of a prolipoprotein, the first step in the formation of mature lipoproteins. The sequence is that of Phosphatidylglycerol--prolipoprotein diacylglyceryl transferase from Rhodococcus jostii (strain RHA1).